The primary structure comprises 307 residues: Taste receptor type 2 member 10 (307 aa).

The Extracellular segment spans residues 1-6; the sequence is MLRVVE. Residues 7-27 form a helical membrane-spanning segment; that stretch reads GIFIFVVISEXVFGVLGNGFI. Topologically, residues 28–42 are cytoplasmic; the sequence is GLVNCIDCAKNKLST. The chain crosses the membrane as a helical span at residues 43–63; that stretch reads IGFILTGLAISRIFLIWIIIT. Residues 64-100 are Extracellular-facing; that stretch reads DGFIQIFSPDIYASGNLIEYISYFWVIGNQSSMWFAT. Asparagine 92 is a glycosylation site (N-linked (GlcNAc...) asparagine). The helical transmembrane segment at 101 to 121 threads the bilayer; it reads SLSIFYFLKIANFSNYIFLWL. Residues 122–126 lie on the Cytoplasmic side of the membrane; sequence KSRTN. A helical membrane pass occupies residues 127–147; the sequence is MVLPFMIVFLLISSLLNFAHI. The Extracellular segment spans residues 148–179; that stretch reads AKILNDYKMKNDTVWDLNMYKSEYFIKQILLN. The N-linked (GlcNAc...) asparagine glycan is linked to asparagine 158. The chain crosses the membrane as a helical span at residues 180–200; it reads LGVIFFFTLSLITCVFLIISL. At 201 to 227 the chain is on the cytoplasmic side; that stretch reads WRHNRQMQSNVTGLRDSNTEAHVKAMK. The chain crosses the membrane as a helical span at residues 228–248; sequence VLISFXILFILYFIGMAIEIS. The Extracellular segment spans residues 249 to 257; it reads CFTVRENKL. A helical membrane pass occupies residues 258-278; that stretch reads LLMFGMTTTAIYPWGHSFILI. Residues 279-307 are Cytoplasmic-facing; it reads LGNSKLKQASLRVLQQLKCCEKRKNLRVT.

Belongs to the G-protein coupled receptor T2R family.

It is found in the membrane. Receptor that may play a role in the perception of bitterness and is gustducin-linked. May play a role in sensing the chemical composition of the gastrointestinal content. The activity of this receptor may stimulate alpha gustducin, mediate PLC-beta-2 activation and lead to the gating of TRPM5. In Gorilla gorilla gorilla (Western lowland gorilla), this protein is Taste receptor type 2 member 10 (TAS2R10).